Consider the following 233-residue polypeptide: ATP-dependent dethiobiotin synthetase BioD (233 aa).

ATP is bound at residue 12-17 (GVGKTI). Thr16 contributes to the Mg(2+) binding site. Lys37 is a catalytic residue. A substrate-binding site is contributed by Ser41. ATP-binding positions include Asp51, 112-115 (EGAG), and 202-204 (PKL). Mg(2+) is bound by residues Asp51 and Glu112.

Belongs to the dethiobiotin synthetase family. Homodimer. Mg(2+) serves as cofactor.

The protein localises to the cytoplasm. It carries out the reaction (7R,8S)-7,8-diammoniononanoate + CO2 + ATP = (4R,5S)-dethiobiotin + ADP + phosphate + 3 H(+). It participates in cofactor biosynthesis; biotin biosynthesis; biotin from 7,8-diaminononanoate: step 1/2. Functionally, catalyzes a mechanistically unusual reaction, the ATP-dependent insertion of CO2 between the N7 and N8 nitrogen atoms of 7,8-diaminopelargonic acid (DAPA, also called 7,8-diammoniononanoate) to form a ureido ring. This is ATP-dependent dethiobiotin synthetase BioD from Bacillus velezensis (strain DSM 23117 / BGSC 10A6 / LMG 26770 / FZB42) (Bacillus amyloliquefaciens subsp. plantarum).